The primary structure comprises 307 residues: D-alanine--D-alanine ligase (307 aa).

An ATP-grasp domain is found at 110 to 299 (KQLWKGAGLP…FDVLVGEILL (190 aa)). 136–185 (PVIVKPAHEGSSIGMAKADNTEELGEALVAAEKFDQDVLVEAWVNGPEYT) contacts ATP. Positions 253, 266, and 268 each coordinate Mg(2+).

The protein belongs to the D-alanine--D-alanine ligase family. Mg(2+) is required as a cofactor. The cofactor is Mn(2+).

The protein resides in the cytoplasm. It catalyses the reaction 2 D-alanine + ATP = D-alanyl-D-alanine + ADP + phosphate + H(+). The protein operates within cell wall biogenesis; peptidoglycan biosynthesis. Its function is as follows. Cell wall formation. This chain is D-alanine--D-alanine ligase, found in Alcanivorax borkumensis (strain ATCC 700651 / DSM 11573 / NCIMB 13689 / SK2).